Reading from the N-terminus, the 503-residue chain is ATP synthase subunit alpha (503 aa).

170–177 (GDRKTGKT) contributes to the ATP binding site.

The protein belongs to the ATPase alpha/beta chains family. F-type ATPases have 2 components, CF(1) - the catalytic core - and CF(0) - the membrane proton channel. CF(1) has five subunits: alpha(3), beta(3), gamma(1), delta(1), epsilon(1). CF(0) has four main subunits: a(1), b(1), b'(1) and c(9-12).

The protein resides in the cellular thylakoid membrane. The enzyme catalyses ATP + H2O + 4 H(+)(in) = ADP + phosphate + 5 H(+)(out). Its function is as follows. Produces ATP from ADP in the presence of a proton gradient across the membrane. The alpha chain is a regulatory subunit. The sequence is that of ATP synthase subunit alpha from Synechocystis sp. (strain ATCC 27184 / PCC 6803 / Kazusa).